The chain runs to 397 residues: tRNA(Met) cytidine acetate ligase (397 aa).

Residues 7–20 (VTEY…HIYH), Gly101, Asn152, and Arg177 contribute to the ATP site.

It belongs to the TmcAL family.

The protein localises to the cytoplasm. The catalysed reaction is cytidine(34) in elongator tRNA(Met) + acetate + ATP = N(4)-acetylcytidine(34) in elongator tRNA(Met) + AMP + diphosphate. In terms of biological role, catalyzes the formation of N(4)-acetylcytidine (ac(4)C) at the wobble position of elongator tRNA(Met), using acetate and ATP as substrates. First activates an acetate ion to form acetyladenylate (Ac-AMP) and then transfers the acetyl group to tRNA to form ac(4)C34. This is tRNA(Met) cytidine acetate ligase from Leuconostoc citreum (strain KM20).